The following is a 509-amino-acid chain: Butyrophilin-like protein 1 (509 aa).

An N-terminal signal peptide occupies residues 1 to 27 (MMKGSPSVPPAGCLLPLLLLLFTGVSG). Ig-like V-type domains follow at residues 28–139 (EVSW…QEVS) and 151–237 (PLVH…KAIL). The Extracellular portion of the chain corresponds to 28–250 (EVSWFSVKGP…PFFPKTCPWK (223 aa)). Cystine bridges form between C53–C127 and C167–C221. The chain crosses the membrane as a helical span at residues 251–271 (VALVCSVLILLVLLGGISLGI). Residues 272–509 (WKEHQVKRRE…SMGLSATAQP (238 aa)) lie on the Cytoplasmic side of the membrane. Residues 316–509 (RKALYKEDWK…SMGLSATAQP (194 aa)) form the B30.2/SPRY domain. The segment at 349–372 (MPDQDKTDSRTEENRGEETVSSSQ) is disordered. Residues 351–366 (DQDKTDSRTEENRGEE) are compositionally biased toward basic and acidic residues.

The protein belongs to the immunoglobulin superfamily. BTN/MOG family.

It is found in the membrane. The sequence is that of Butyrophilin-like protein 1 (Btnl1) from Mus musculus (Mouse).